Consider the following 750-residue polypeptide: Cullin-5 (750 aa).

The Cullin neddylation domain maps to 678–739; it reads RFFKLQAAIV…QEYIRRTTDD (62 aa). Lys-691 is covalently cross-linked (Glycyl lysine isopeptide (Lys-Gly) (interchain with G-Cter in NEDD8)).

It belongs to the cullin family. Post-translationally, neddylated; which enhances the ubiquitination activity of SCF-like complex.

It participates in protein modification; protein ubiquitination. Functionally, probable core component of cullin-based SCF-like E3 ubiquitin-protein ligase complexes which mediate the ubiquitination and subsequent proteasomal degradation of target proteins. The E3 ubiquitin-protein ligase activity of the complex is dependent on the neddylation of the cullin subunit. In Dictyostelium discoideum (Social amoeba), this protein is Cullin-5 (culE).